The primary structure comprises 488 residues: Ribulose bisphosphate carboxylase large chain (488 aa).

Positions 127 and 177 each coordinate substrate. The active-site Proton acceptor is the lysine 179. A substrate-binding site is contributed by lysine 181. Lysine 205, aspartate 207, and glutamate 208 together coordinate Mg(2+). An N6-carboxylysine modification is found at lysine 205. Histidine 297 functions as the Proton acceptor in the catalytic mechanism. Substrate-binding residues include arginine 298, histidine 330, and serine 382.

Belongs to the RuBisCO large chain family. Type I subfamily. As to quaternary structure, heterohexadecamer of 8 large chains and 8 small chains. Mg(2+) serves as cofactor.

It is found in the plastid. It localises to the chloroplast. It carries out the reaction 2 (2R)-3-phosphoglycerate + 2 H(+) = D-ribulose 1,5-bisphosphate + CO2 + H2O. It catalyses the reaction D-ribulose 1,5-bisphosphate + O2 = 2-phosphoglycolate + (2R)-3-phosphoglycerate + 2 H(+). Functionally, ruBisCO catalyzes two reactions: the carboxylation of D-ribulose 1,5-bisphosphate, the primary event in carbon dioxide fixation, as well as the oxidative fragmentation of the pentose substrate in the photorespiration process. Both reactions occur simultaneously and in competition at the same active site. The chain is Ribulose bisphosphate carboxylase large chain from Chrysotila carterae (Marine alga).